Consider the following 786-residue polypeptide: Polyribonucleotide nucleotidyltransferase (786 aa).

Positions 516 and 522 each coordinate Mg(2+). Residues 582 to 641 enclose the KH domain; that stretch reads PRVTTVKIPVDKIGMVIGPKGQTINAIQDETGAEISIEDDGTIYVGATNGPSAQAAVERV. An S1 motif domain is found at 653–722; it reads GDRFLGTVVK…QRGKIYLDKV (70 aa). Positions 722–786 are disordered; sequence VRPEGAEGPA…SRPRRRTRHS (65 aa). Over residues 727-738 the composition is skewed to low complexity; sequence AEGPAEAAATDR. The span at 739–778 shows a compositional bias: basic and acidic residues; that stretch reads PAGRDRGDRAPRDRGDRGDRERGSRGPDRGDGGEGGGESR.

Belongs to the polyribonucleotide nucleotidyltransferase family. It depends on Mg(2+) as a cofactor.

The protein localises to the cytoplasm. The catalysed reaction is RNA(n+1) + phosphate = RNA(n) + a ribonucleoside 5'-diphosphate. Functionally, involved in mRNA degradation. Catalyzes the phosphorolysis of single-stranded polyribonucleotides processively in the 3'- to 5'-direction. This is Polyribonucleotide nucleotidyltransferase from Salinispora arenicola (strain CNS-205).